A 181-amino-acid polypeptide reads, in one-letter code: NAD(P)H-quinone oxidoreductase subunit 6, chloroplastic (181 aa).

A run of 5 helical transmembrane segments spans residues 13–33, 35–55, 64–84, 98–118, and 152–172; these read PILY…VFFG, IIYS…LYLL, AQIL…IMLI, FGDI…IIMI, and LLPF…AITI.

Belongs to the complex I subunit 6 family. NDH is composed of at least 16 different subunits, 5 of which are encoded in the nucleus.

Its subcellular location is the plastid. The protein localises to the chloroplast thylakoid membrane. The catalysed reaction is a plastoquinone + NADH + (n+1) H(+)(in) = a plastoquinol + NAD(+) + n H(+)(out). It carries out the reaction a plastoquinone + NADPH + (n+1) H(+)(in) = a plastoquinol + NADP(+) + n H(+)(out). NDH shuttles electrons from NAD(P)H:plastoquinone, via FMN and iron-sulfur (Fe-S) centers, to quinones in the photosynthetic chain and possibly in a chloroplast respiratory chain. The immediate electron acceptor for the enzyme in this species is believed to be plastoquinone. Couples the redox reaction to proton translocation, and thus conserves the redox energy in a proton gradient. The polypeptide is NAD(P)H-quinone oxidoreductase subunit 6, chloroplastic (ndhG) (Staurastrum punctulatum (Green alga)).